We begin with the raw amino-acid sequence, 119 residues long: uncharacterized protein (119 aa).

A run of 2 helical transmembrane segments spans residues 19-39 and 68-88; these read FYPS…PSFL and FPWF…PWLL.

The protein resides in the membrane. This is an uncharacterized protein from Saccharomyces cerevisiae (strain ATCC 204508 / S288c) (Baker's yeast).